A 235-amino-acid chain; its full sequence is 7-cyano-7-deazaguanine synthase (235 aa).

8-18 (FSGGQDSTTCL) provides a ligand contact to ATP. Residues Cys187, Cys196, Cys199, and Cys202 each contribute to the Zn(2+) site.

The protein belongs to the QueC family. Requires Zn(2+) as cofactor.

The enzyme catalyses 7-carboxy-7-deazaguanine + NH4(+) + ATP = 7-cyano-7-deazaguanine + ADP + phosphate + H2O + H(+). Its pathway is purine metabolism; 7-cyano-7-deazaguanine biosynthesis. Its function is as follows. Catalyzes the ATP-dependent conversion of 7-carboxy-7-deazaguanine (CDG) to 7-cyano-7-deazaguanine (preQ(0)). The polypeptide is 7-cyano-7-deazaguanine synthase (Aeromonas hydrophila subsp. hydrophila (strain ATCC 7966 / DSM 30187 / BCRC 13018 / CCUG 14551 / JCM 1027 / KCTC 2358 / NCIMB 9240 / NCTC 8049)).